Reading from the N-terminus, the 1269-residue chain is Regulator of nonsense transcripts 2 (1269 aa).

Disordered stretches follow at residues 1 to 125 (MPAE…EKEE) and 143 to 162 (LRSK…FFSR). The stretch at 57–133 (KKRLEEDKRK…EESLQLHQEA (77 aa)) forms a coiled coil. Residues 94-132 (KKKQEEEERKKQEEQAKRQQEEAAAQLKEKEESLQLHQE) are sufficient for interaction with UPF1. An MIF4G 1 domain is found at 168-396 (KKNTAFVKKL…KGELSEDRHK (229 aa)). Disordered regions lie at residues 422–444 (NMPD…DIFT) and 487–518 (KSQN…DLEL). 2 stretches are compositionally biased toward basic and acidic residues: residues 427-438 (PQDKPTPEEHGP) and 487-511 (KSQN…KEAS). 2 consecutive MIF4G domains span residues 571–755 (QQLP…YCNP) and 774–984 (RKLL…LRPK). The sufficient for interaction with UPF3A and UPF3B stretch occupies residues 709 to 926 (GRFLFRSPES…IRLVCTILDT (218 aa)). Residues 755–1269 (PPPAEKTVRK…LIFKTGGRRR (515 aa)) are sufficient for interaction with EIF4A1 and EIF1. Residues 837–857 (EDVGIHVVDGVLEDIRLGMEV) are binds to UPF3B. The segment at 1017–1090 (SKDSMTEGEN…KENETDEENA (74 aa)) is disordered. The segment covering 1025 to 1073 (ENLEEDEEEEEGGAETEEQSGNESEVNEPEEEEGSEEEEEGEEEEEENT) has biased composition (acidic residues). Positions 1081-1269 (KENETDEENA…LIFKTGGRRR (189 aa)) are sufficient for interaction with UPF1 C-terminus. A Phosphothreonine modification is found at threonine 1085. 2 interaction with UPF1 regions span residues 1102–1126 (VPCV…QQRS) and 1164–1204 (DTMP…AEQE). The necessary for interaction with UPF1 stretch occupies residues 1102 to 1195 (VPCVEDEDFI…PMSSQLAANH (94 aa)). A disordered region spans residues 1218-1269 (ERQEQEDYQEMLQSLAQRPAPANTNRERRPRYQHPKGAPNADLIFKTGGRRR).

In terms of assembly, found in a post-splicing messenger ribonucleoprotein (mRNP) complex. Associates with the exon junction complex (EJC). Interacts with SMG1, EST1A, UPF3A, UPF3B, EIF4A1 and EIF1. Interacts with UPF1; interaction is promoted by TDRD6. Interacts with DDX4. Localized in male germ cells.

It is found in the cytoplasm. Its subcellular location is the perinuclear region. Functionally, involved in nonsense-mediated decay (NMD) of mRNAs containing premature stop codons by associating with the nuclear exon junction complex (EJC). Recruited by UPF3B associated with the EJC core at the cytoplasmic side of the nuclear envelope and the subsequent formation of an UPF1-UPF2-UPF3 surveillance complex (including UPF1 bound to release factors at the stalled ribosome) is believed to activate NMD. In cooperation with UPF3B stimulates both ATPase and RNA helicase activities of UPF1. Binds spliced mRNA. The polypeptide is Regulator of nonsense transcripts 2 (Mus musculus (Mouse)).